A 203-amino-acid polypeptide reads, in one-letter code: Protein GrpE (203 aa).

The span at 1–10 (MSNESIKAEQ) shows a compositional bias: basic and acidic residues. The tract at residues 1-20 (MSNESIKAEQDLIQEGVESE) is disordered.

It belongs to the GrpE family. Homodimer.

The protein localises to the cytoplasm. In terms of biological role, participates actively in the response to hyperosmotic and heat shock by preventing the aggregation of stress-denatured proteins, in association with DnaK and GrpE. It is the nucleotide exchange factor for DnaK and may function as a thermosensor. Unfolded proteins bind initially to DnaJ; upon interaction with the DnaJ-bound protein, DnaK hydrolyzes its bound ATP, resulting in the formation of a stable complex. GrpE releases ADP from DnaK; ATP binding to DnaK triggers the release of the substrate protein, thus completing the reaction cycle. Several rounds of ATP-dependent interactions between DnaJ, DnaK and GrpE are required for fully efficient folding. This is Protein GrpE from Shewanella sp. (strain MR-4).